Consider the following 496-residue polypeptide: UDP-N-acetylmuramoyl-L-alanyl-D-glutamate--2,6-diaminopimelate ligase (496 aa).

Ser-32 is a UDP-N-acetyl-alpha-D-muramoyl-L-alanyl-D-glutamate binding site. 116–122 (GTNGKTT) contributes to the ATP binding site. UDP-N-acetyl-alpha-D-muramoyl-L-alanyl-D-glutamate-binding positions include 158-159 (TT), Ser-185, Gln-191, and Arg-193. An N6-carboxylysine modification is found at Lys-225. Residues Arg-389, 413–416 (DNPR), Gly-464, and Glu-468 contribute to the meso-2,6-diaminopimelate site. The Meso-diaminopimelate recognition motif signature appears at 413 to 416 (DNPR).

It belongs to the MurCDEF family. MurE subfamily. The cofactor is Mg(2+). Post-translationally, carboxylation is probably crucial for Mg(2+) binding and, consequently, for the gamma-phosphate positioning of ATP.

It is found in the cytoplasm. The enzyme catalyses UDP-N-acetyl-alpha-D-muramoyl-L-alanyl-D-glutamate + meso-2,6-diaminopimelate + ATP = UDP-N-acetyl-alpha-D-muramoyl-L-alanyl-gamma-D-glutamyl-meso-2,6-diaminopimelate + ADP + phosphate + H(+). It functions in the pathway cell wall biogenesis; peptidoglycan biosynthesis. Functionally, catalyzes the addition of meso-diaminopimelic acid to the nucleotide precursor UDP-N-acetylmuramoyl-L-alanyl-D-glutamate (UMAG) in the biosynthesis of bacterial cell-wall peptidoglycan. This Nostoc sp. (strain PCC 7120 / SAG 25.82 / UTEX 2576) protein is UDP-N-acetylmuramoyl-L-alanyl-D-glutamate--2,6-diaminopimelate ligase.